The sequence spans 1196 residues: Protein EFR3 (1196 aa).

Disordered regions lie at residues 486–508 (PSKSNSPGNTSPQGEKIDGQVAS), 806–847 (FASP…EVPS), 872–951 (SASL…IRSG), and 1008–1160 (GSVT…TSAG). The segment covering 487–498 (SKSNSPGNTSPQ) has biased composition (polar residues). The span at 806–817 (FASPPTSPAASP) shows a compositional bias: low complexity. Positions 819–837 (RSFTSPILGSQMSGLSPHT) are enriched in polar residues. Positions 838 to 847 (ATDDEREVPS) are enriched in basic and acidic residues. Polar residues-rich tracts occupy residues 872–888 (SASLNGSKTGTTGTSRY), 898–909 (GSPMASQQNLRP), and 934–944 (LRSNATPSPAS). The span at 1036-1045 (SRSGAESPGG) shows a compositional bias: low complexity. The span at 1049–1062 (LSRSNSFGKSNGNG) shows a compositional bias: polar residues. Over residues 1064–1076 (TIEDGRHDRHDDD) the composition is skewed to basic and acidic residues. The segment covering 1079-1095 (PPVPPLPSGVSSPPLPP) has biased composition (pro residues). Residues 1127–1140 (AKTRSLKSRGRHSR) show a composition bias toward basic residues.

Belongs to the EFR3 family.

The protein is Protein EFR3 (EFR3) of Pyricularia oryzae (strain 70-15 / ATCC MYA-4617 / FGSC 8958) (Rice blast fungus).